The following is a 798-amino-acid chain: Penicillin-binding protein 1A (798 aa).

Over 1–9 (MIKKIMTTC) the chain is Cytoplasmic. A helical; Signal-anchor for type II membrane protein transmembrane segment spans residues 10–30 (FGLVFGLCVFAVGLLAIAILA). Over 31-798 (TYPKLPSLDS…SKRQQLDSLF (768 aa)) the chain is Periplasmic. Residues 50 to 218 (LTVYSADGKI…SAYNPIVNPE (169 aa)) are transglycosylase. The Proton donor; for transglycosylase activity role is filled by Glu88. The transpeptidase stretch occupies residues 378 to 700 (RRALGFAARA…GTIAVPVWVD (323 aa)). Ser461 (acyl-ester intermediate; for transpeptidase activity) is an active-site residue. The segment at 739-798 (LMLDNGGAAPQPSRRVKEDDGGAAEGGRQEADDESRQDMQETPVLPSNTDSKRQQLDSLF) is disordered. Composition is skewed to basic and acidic residues over residues 765-777 (GRQEADDESRQDM) and 788-798 (DSKRQQLDSLF).

The protein in the N-terminal section; belongs to the glycosyltransferase 51 family. In the C-terminal section; belongs to the transpeptidase family.

The protein resides in the cell inner membrane. It catalyses the reaction [GlcNAc-(1-&gt;4)-Mur2Ac(oyl-L-Ala-gamma-D-Glu-L-Lys-D-Ala-D-Ala)](n)-di-trans,octa-cis-undecaprenyl diphosphate + beta-D-GlcNAc-(1-&gt;4)-Mur2Ac(oyl-L-Ala-gamma-D-Glu-L-Lys-D-Ala-D-Ala)-di-trans,octa-cis-undecaprenyl diphosphate = [GlcNAc-(1-&gt;4)-Mur2Ac(oyl-L-Ala-gamma-D-Glu-L-Lys-D-Ala-D-Ala)](n+1)-di-trans,octa-cis-undecaprenyl diphosphate + di-trans,octa-cis-undecaprenyl diphosphate + H(+). The catalysed reaction is Preferential cleavage: (Ac)2-L-Lys-D-Ala-|-D-Ala. Also transpeptidation of peptidyl-alanyl moieties that are N-acyl substituents of D-alanine.. Its pathway is cell wall biogenesis; peptidoglycan biosynthesis. Its function is as follows. Cell wall formation. Synthesis of cross-linked peptidoglycan from the lipid intermediates. The enzyme has a penicillin-insensitive transglycosylase N-terminal domain (formation of linear glycan strands) and a penicillin-sensitive transpeptidase C-terminal domain (cross-linking of the peptide subunits). This chain is Penicillin-binding protein 1A (mrcA), found in Neisseria lactamica.